The chain runs to 1845 residues: Collagen alpha-1(XXVII) chain (1845 aa).

Residues M1 to G39 form the signal peptide. A propeptide spans A40 to M609 (N-terminal propeptide). Residues P72 to C237 enclose the Laminin G-like domain. N272 carries N-linked (GlcNAc...) asparagine glycosylation. Disordered stretches follow at residues T299–T478, P502–T572, L608–P774, and L827–Q1608. Residues H312–K323 are compositionally biased toward polar residues. Low complexity-rich tracts occupy residues R327–R343 and T356–P372. N340 carries an N-linked (GlcNAc...) asparagine glycan. Pro residues predominate over residues P429–L439. Residues G444–V454 show a composition bias toward polar residues. Residues S554–T564 are compositionally biased toward basic and acidic residues. Collagen-like domains are found at residues G610 to G664, G673 to V732, G742 to P801, G817 to L876, G877 to M936, G937 to K996, G997 to R1038, G1039 to G1096, G1117 to E1176, G1177 to K1236, and G1240 to K1299. Residues G610–P1603 are triple-helical. Pro residues predominate over residues R639–P654. 2 stretches are compositionally biased toward low complexity: residues N677 to L690 and P699 to A719. The segment covering G865–G874 has biased composition (gly residues). The span at F896–E909 shows a compositional bias: low complexity. Residues G1018–G1027 show a composition bias toward gly residues. 3 stretches are compositionally biased toward low complexity: residues R1074–A1086, L1112–Q1122, and K1152–I1167. Composition is skewed to basic and acidic residues over residues L1187–D1212 and R1226–Q1238. 2 stretches are compositionally biased toward basic and acidic residues: residues K1311–T1323 and P1335–P1345. A Collagen-like 12 domain is found at G1325–K1384. 3 stretches are compositionally biased toward low complexity: residues R1360–P1369, K1395–P1422, and P1438–A1465. Collagen-like domains are found at residues G1424 to P1483, G1484 to Q1543, and G1544 to P1603. Residues I1557–P1572 are compositionally biased toward low complexity. The span at R1588–H1605 shows a compositional bias: pro residues. The propeptide at I1607–L1845 is C-terminal propeptide. The 201-residue stretch at G1645–L1845 folds into the Fibrillar collagen NC1 domain. Cystine bridges form between C1675–C1707, C1716–C1843, and C1752–C1796. Ca(2+) contacts are provided by D1693, N1695, C1698, and D1701. N-linked (GlcNAc...) asparagine glycosylation is present at N1754.

It belongs to the fibrillar collagen family. Highly expressed in cartilage, eye and ear.

The protein localises to the secreted. It is found in the extracellular space. The protein resides in the extracellular matrix. Functionally, plays a role during the calcification of cartilage and the transition of cartilage to bone. The polypeptide is Collagen alpha-1(XXVII) chain (Col27a1) (Mus musculus (Mouse)).